The following is a 495-amino-acid chain: Alkaline protease 2 (495 aa).

The N-terminal stretch at 1 to 16 (MKGYLSLSILPLLVAA) is a signal peptide. Residues 17–136 (SPVVVDSIHN…IEKDSEVHTM (120 aa)) constitute a propeptide that is removed on maturation. An Inhibitor I9 domain is found at 43-136 (SYIVVFKKHV…IEKDSEVHTM (94 aa)). Positions 146 to 452 (PWGLARISHR…GGSSNYTDII (307 aa)) constitute a Peptidase S8 domain. Active-site charge relay system residues include Asp-182 and His-214. Asn-284 carries an N-linked (GlcNAc...) asparagine glycan. Ser-380 serves as the catalytic Charge relay system. N-linked (GlcNAc...) asparagine glycosylation is found at Asn-447 and Asn-460.

Belongs to the peptidase S8 family.

It carries out the reaction Hydrolysis of proteins with broad specificity, and of Bz-Arg-OEt &gt; Ac-Tyr-OEt. Does not hydrolyze peptide amides.. Functionally, alkaline protease that allows assimilation of proteinaceous substrates. Acts as a significant virulence factor in invasive aspergillosis. Required for regular sporulation. The sequence is that of Alkaline protease 2 (alp2) from Aspergillus fumigatus (strain CBS 144.89 / FGSC A1163 / CEA10) (Neosartorya fumigata).